Here is a 350-residue protein sequence, read N- to C-terminus: Histidinol-phosphate aminotransferase (350 aa).

Lys207 is subject to N6-(pyridoxal phosphate)lysine.

The protein belongs to the class-II pyridoxal-phosphate-dependent aminotransferase family. Histidinol-phosphate aminotransferase subfamily. As to quaternary structure, homodimer. Requires pyridoxal 5'-phosphate as cofactor.

The catalysed reaction is L-histidinol phosphate + 2-oxoglutarate = 3-(imidazol-4-yl)-2-oxopropyl phosphate + L-glutamate. The protein operates within amino-acid biosynthesis; L-histidine biosynthesis; L-histidine from 5-phospho-alpha-D-ribose 1-diphosphate: step 7/9. This chain is Histidinol-phosphate aminotransferase, found in Streptococcus thermophilus (strain ATCC BAA-491 / LMD-9).